Reading from the N-terminus, the 183-residue chain is Threonylcarbamoyl-AMP synthase (183 aa).

The region spanning 1–183 (MELAQIVERL…IFSRQIFRRG (183 aa)) is the YrdC-like domain.

It belongs to the SUA5 family. TsaC subfamily.

The protein resides in the cytoplasm. It carries out the reaction L-threonine + hydrogencarbonate + ATP = L-threonylcarbamoyladenylate + diphosphate + H2O. In terms of biological role, required for the formation of a threonylcarbamoyl group on adenosine at position 37 (t(6)A37) in tRNAs that read codons beginning with adenine. Catalyzes the conversion of L-threonine, HCO(3)(-)/CO(2) and ATP to give threonylcarbamoyl-AMP (TC-AMP) as the acyladenylate intermediate, with the release of diphosphate. The polypeptide is Threonylcarbamoyl-AMP synthase (Mannheimia succiniciproducens (strain KCTC 0769BP / MBEL55E)).